The chain runs to 412 residues: Serine hydroxymethyltransferase (412 aa).

Residues L116 and 120–122 each bind (6S)-5,6,7,8-tetrahydrofolate; that span reads GHL. At K225 the chain carries N6-(pyridoxal phosphate)lysine. (6S)-5,6,7,8-tetrahydrofolate contacts are provided by residues E241 and 350 to 352; that span reads SPF.

It belongs to the SHMT family. As to quaternary structure, homodimer. It depends on pyridoxal 5'-phosphate as a cofactor.

It is found in the cytoplasm. It carries out the reaction (6R)-5,10-methylene-5,6,7,8-tetrahydrofolate + glycine + H2O = (6S)-5,6,7,8-tetrahydrofolate + L-serine. It functions in the pathway one-carbon metabolism; tetrahydrofolate interconversion. It participates in amino-acid biosynthesis; glycine biosynthesis; glycine from L-serine: step 1/1. Catalyzes the reversible interconversion of serine and glycine with tetrahydrofolate (THF) serving as the one-carbon carrier. This reaction serves as the major source of one-carbon groups required for the biosynthesis of purines, thymidylate, methionine, and other important biomolecules. Also exhibits THF-independent aldolase activity toward beta-hydroxyamino acids, producing glycine and aldehydes, via a retro-aldol mechanism. This Enterococcus faecalis (strain ATCC 700802 / V583) protein is Serine hydroxymethyltransferase.